The following is a 258-amino-acid chain: Thiazole synthase (258 aa).

Residue K100 is the Schiff-base intermediate with DXP of the active site. 1-deoxy-D-xylulose 5-phosphate contacts are provided by residues G161, A187 to G188, and N209 to T210.

This sequence belongs to the ThiG family. As to quaternary structure, homotetramer. Forms heterodimers with either ThiH or ThiS.

It localises to the cytoplasm. The enzyme catalyses [ThiS sulfur-carrier protein]-C-terminal-Gly-aminoethanethioate + 2-iminoacetate + 1-deoxy-D-xylulose 5-phosphate = [ThiS sulfur-carrier protein]-C-terminal Gly-Gly + 2-[(2R,5Z)-2-carboxy-4-methylthiazol-5(2H)-ylidene]ethyl phosphate + 2 H2O + H(+). Its pathway is cofactor biosynthesis; thiamine diphosphate biosynthesis. Its function is as follows. Catalyzes the rearrangement of 1-deoxy-D-xylulose 5-phosphate (DXP) to produce the thiazole phosphate moiety of thiamine. Sulfur is provided by the thiocarboxylate moiety of the carrier protein ThiS. In vitro, sulfur can be provided by H(2)S. The chain is Thiazole synthase from Campylobacter jejuni subsp. doylei (strain ATCC BAA-1458 / RM4099 / 269.97).